Reading from the N-terminus, the 480-residue chain is Probable cobyric acid synthase (480 aa).

A GATase cobBQ-type domain is found at 246–431 (PVRIAVIRLP…MHGLFLNPSA (186 aa)). The active-site Nucleophile is the cysteine 325. Residue histidine 423 is part of the active site.

This sequence belongs to the CobB/CobQ family. CobQ subfamily.

It functions in the pathway cofactor biosynthesis; adenosylcobalamin biosynthesis. In terms of biological role, catalyzes amidations at positions B, D, E, and G on adenosylcobyrinic A,C-diamide. NH(2) groups are provided by glutamine, and one molecule of ATP is hydrogenolyzed for each amidation. This Methanoregula boonei (strain DSM 21154 / JCM 14090 / 6A8) protein is Probable cobyric acid synthase.